The chain runs to 133 residues: 6,7-dimethyl-8-ribityllumazine synthase (133 aa).

5-amino-6-(D-ribitylamino)uracil contacts are provided by residues phenylalanine 11, 43–45 (AYD), and 67–69 (AIV). 72–73 (DT) is a (2S)-2-hydroxy-3-oxobutyl phosphate binding site. Residue histidine 75 is the Proton donor of the active site. Position 100 (phenylalanine 100) interacts with 5-amino-6-(D-ribitylamino)uracil. Arginine 115 provides a ligand contact to (2S)-2-hydroxy-3-oxobutyl phosphate.

This sequence belongs to the DMRL synthase family.

The catalysed reaction is (2S)-2-hydroxy-3-oxobutyl phosphate + 5-amino-6-(D-ribitylamino)uracil = 6,7-dimethyl-8-(1-D-ribityl)lumazine + phosphate + 2 H2O + H(+). The protein operates within cofactor biosynthesis; riboflavin biosynthesis; riboflavin from 2-hydroxy-3-oxobutyl phosphate and 5-amino-6-(D-ribitylamino)uracil: step 1/2. Functionally, catalyzes the formation of 6,7-dimethyl-8-ribityllumazine by condensation of 5-amino-6-(D-ribitylamino)uracil with 3,4-dihydroxy-2-butanone 4-phosphate. This is the penultimate step in the biosynthesis of riboflavin. The polypeptide is 6,7-dimethyl-8-ribityllumazine synthase (Halobacterium salinarum (strain ATCC 29341 / DSM 671 / R1)).